Here is a 1348-residue protein sequence, read N- to C-terminus: Phosphoribosylformylglycinamidine synthase (1348 aa).

ATP-binding positions include G300–D311 and A701. The Mg(2+) site is built by D702, E741, N745, and D941. S943 lines the ATP pocket. The region spanning V1099–G1348 is the Glutamine amidotransferase type-1 domain. Residue C1192 is the Nucleophile of the active site. Active-site residues include H1313 and E1315.

This sequence in the N-terminal section; belongs to the FGAMS family. In terms of assembly, monomer.

It is found in the cytoplasm. The enzyme catalyses N(2)-formyl-N(1)-(5-phospho-beta-D-ribosyl)glycinamide + L-glutamine + ATP + H2O = 2-formamido-N(1)-(5-O-phospho-beta-D-ribosyl)acetamidine + L-glutamate + ADP + phosphate + H(+). It participates in purine metabolism; IMP biosynthesis via de novo pathway; 5-amino-1-(5-phospho-D-ribosyl)imidazole from N(2)-formyl-N(1)-(5-phospho-D-ribosyl)glycinamide: step 1/2. In terms of biological role, phosphoribosylformylglycinamidine synthase involved in the purines biosynthetic pathway. Catalyzes the ATP-dependent conversion of formylglycinamide ribonucleotide (FGAR) and glutamine to yield formylglycinamidine ribonucleotide (FGAM) and glutamate. The sequence is that of Phosphoribosylformylglycinamidine synthase from Xanthomonas campestris pv. campestris (strain ATCC 33913 / DSM 3586 / NCPPB 528 / LMG 568 / P 25).